A 1047-amino-acid polypeptide reads, in one-letter code: UPF0182 protein Mlut_14990 (1047 aa).

2 stretches are compositionally biased toward gly residues: residues 1 to 27 and 49 to 59; these read MSFG…GQSG and GPGGPFGGGGS. Positions 1–66 are disordered; sequence MSFGQGGGGP…GGSSAARGRG (66 aa). 7 helical membrane-spanning segments follow: residues 71-91, 114-134, 168-188, 214-234, 266-286, 314-334, and 341-361; these read PSAL…FVVF, VLAK…AVWL, LVFL…AMNG, FFMA…SVVL, AHIG…FWLN, AILA…VVSG, and IGTA…PFIV. Disordered regions lie at residues 544–568, 941–965, and 1007–1047; these read GAPA…TFSG, GDSG…PTAP, and EALK…TPSG. The span at 555 to 565 shows a compositional bias: polar residues; it reads TADSQEDTAYT. The segment covering 1015 to 1037 has biased composition (low complexity); the sequence is ADDALGGDAPAQEQAPAEASPAP. The span at 1038–1047 shows a compositional bias: pro residues; the sequence is SSSPSPTPSG.

The protein belongs to the UPF0182 family.

The protein resides in the cell membrane. This is UPF0182 protein Mlut_14990 from Micrococcus luteus (strain ATCC 4698 / DSM 20030 / JCM 1464 / CCM 169 / CCUG 5858 / IAM 1056 / NBRC 3333 / NCIMB 9278 / NCTC 2665 / VKM Ac-2230) (Micrococcus lysodeikticus).